Here is a 568-residue protein sequence, read N- to C-terminus: Phenylalanine--tRNA ligase beta subunit (568 aa).

The 76-residue stretch at 278 to 353 (LTPKSFEVEL…IAYGYNEIEP (76 aa)) folds into the B5 domain. Residues Asp331, Asp337, Glu340, and Asp341 each coordinate Mg(2+).

The protein belongs to the phenylalanyl-tRNA synthetase beta subunit family. Type 2 subfamily. In terms of assembly, tetramer of two alpha and two beta subunits. Mg(2+) is required as a cofactor.

The protein resides in the cytoplasm. It carries out the reaction tRNA(Phe) + L-phenylalanine + ATP = L-phenylalanyl-tRNA(Phe) + AMP + diphosphate + H(+). The protein is Phenylalanine--tRNA ligase beta subunit of Thermococcus gammatolerans (strain DSM 15229 / JCM 11827 / EJ3).